The sequence spans 448 residues: Vacuolar amino acid transporter 6 (448 aa).

Over 1 to 7 (MVASIRS) the chain is Cytoplasmic. A helical membrane pass occupies residues 8–28 (GVLTLLHTACGAGILAMPYAF). Residues 29-32 (KPFG) lie on the Vacuolar side of the membrane. A helical membrane pass occupies residues 33-53 (LIPGVIMIVLCGACAMQSLFI). The Cytoplasmic segment spans residues 54–80 (QARVAKYVPQGRASFSALTRLINPNLG). Residues 81–101 (IVFDLAIAIKCFGVGVSYMIV) traverse the membrane as a helical segment. Residues 102–125 (VGDLMPQIMSVWTRNAWLLNRNVQ) are Vacuolar-facing. A helical membrane pass occupies residues 126–146 (ISLIMLFFVAPLSFLKKLNSL). Over 147–150 (RYAS) the chain is Cytoplasmic. A helical transmembrane segment spans residues 151–171 (MVAISSVAYLCVLVLLHYVAP). Over 172 to 195 (SDEILRLKGRISYLLPPQSHDLNV) the chain is Vacuolar. Residues 196-216 (LNTLPIFVFAYTCHHNMFSII) traverse the membrane as a helical segment. The Cytoplasmic portion of the chain corresponds to 217-229 (NEQRSSRFEHVMK). Residues 230–250 (IPLIAISLALILYIAIGCAGY) traverse the membrane as a helical segment. Residues 251–267 (LTFGDNIIGNIIMLYPQ) are Vacuolar-facing. A helical membrane pass occupies residues 268 to 288 (AVSSTIGRIAIVLLVMLAFPL). At 289 to 357 (QCHPARASIH…PKETPLRGKS (69 aa)) the chain is on the cytoplasmic side. Ser-344 carries the phosphoserine modification. Residues 358 to 378 (FIVITCSILVASYLVAISVSS) form a helical membrane-spanning segment. Over 379-381 (LAR) the chain is Vacuolar. A helical membrane pass occupies residues 382 to 402 (VLAIVGATGSTSISFILPGLF). Topologically, residues 403-424 (GYKLIGTEHKTAVPLTTKIFKY) are cytoplasmic. Residues 425–445 (TGLLLFIWGLIIMITCLTAAL) form a helical membrane-spanning segment. Topologically, residues 446–448 (KLN) are vacuolar.

This sequence belongs to the amino acid/polyamine transporter 2 family.

The protein resides in the vacuole membrane. Involved in amino acid efflux from the vacuole to the cytoplasm. Capable of transporting aspartate and glutamate. Requires ATP for function. This chain is Vacuolar amino acid transporter 6 (AVT6), found in Saccharomyces cerevisiae (strain ATCC 204508 / S288c) (Baker's yeast).